The sequence spans 86 residues: Large ribosomal subunit protein bL27 (86 aa).

A compositionally biased stretch (gly residues) spans M1–T10. The interval M1 to L21 is disordered.

Belongs to the bacterial ribosomal protein bL27 family.

The sequence is that of Large ribosomal subunit protein bL27 from Ralstonia nicotianae (strain ATCC BAA-1114 / GMI1000) (Ralstonia solanacearum).